Here is a 372-residue protein sequence, read N- to C-terminus: Tryptophan--tRNA ligase (372 aa).

The 'HIGH' region signature appears at 79-87 (PSGKFHFGH). A disordered region spans residues 247-268 (KLQPGLDGRKMSSSRPDSTIFL). The short motif at 256–260 (KMSSS) is the 'KMSKS' region element. The segment covering 257–267 (MSSSRPDSTIF) has biased composition (polar residues).

Belongs to the class-I aminoacyl-tRNA synthetase family.

It is found in the cytoplasm. It carries out the reaction tRNA(Trp) + L-tryptophan + ATP = L-tryptophyl-tRNA(Trp) + AMP + diphosphate + H(+). The polypeptide is Tryptophan--tRNA ligase (Aeropyrum pernix (strain ATCC 700893 / DSM 11879 / JCM 9820 / NBRC 100138 / K1)).